We begin with the raw amino-acid sequence, 145 residues long: Cytochrome c550 (145 aa).

The first 24 residues, 1–24 (MNKNNVLRGLLVLAGLSLSSLALA), serve as a signal peptide directing secretion. In terms of domain architecture, Cytochrome c spans 60–142 (LAVEIGASAY…AIRSYLESVH (83 aa)). Residues Cys73, Cys76, His77, and Met119 each contribute to the heme c site.

Monomer. Interacts with the quinoprotein ethanol dehydrogenase (QEDH) ExaA. Post-translationally, binds 1 heme group per subunit.

Its subcellular location is the periplasm. It participates in alcohol metabolism; ethanol degradation; acetate from ethanol. Is an essential component of the ethanol oxidation system that allows P.aeruginosa to grow on ethanol as the sole carbon and energy source. Is the direct electron acceptor of the quinoprotein ethanol dehydrogenase (QEDH). This chain is Cytochrome c550, found in Pseudomonas aeruginosa (strain ATCC 15692 / DSM 22644 / CIP 104116 / JCM 14847 / LMG 12228 / 1C / PRS 101 / PAO1).